We begin with the raw amino-acid sequence, 557 residues long: Putative UDP-glucuronate:xylan alpha-glucuronosyltransferase 4 (557 aa).

The helical; Signal-anchor for type II membrane protein transmembrane segment at lysine 11–phenylalanine 31 threads the bilayer. Positions 365 and 367 each coordinate Mn(2+). Substrate-binding positions include aspartate 365–aspartate 367, asparagine 394–glycine 396, asparagine 421–glutamine 425, and histidine 466–lysine 471. Histidine 466 is a binding site for Mn(2+).

This sequence belongs to the glycosyltransferase 8 family. Glycogenin subfamily. Requires Mn(2+) as cofactor.

The protein resides in the golgi apparatus membrane. May be involved in the substitutions of the xylan backbone in stem glucuronoxylan. This chain is Putative UDP-glucuronate:xylan alpha-glucuronosyltransferase 4 (GUX4), found in Arabidopsis thaliana (Mouse-ear cress).